The sequence spans 630 residues: Probable potassium transport system protein Kup 2 (630 aa).

A run of 12 helical transmembrane segments spans residues Ala14–Thr34, Val56–Lys76, Val108–Thr128, Pro145–Phe165, Ala176–Ile196, Phe214–Thr234, Trp255–Leu275, Leu293–Ile313, Met352–Ala372, Tyr375–Trp395, Pro402–Ala422, and Leu427–Thr447.

It belongs to the HAK/KUP transporter (TC 2.A.72) family.

The protein localises to the cell inner membrane. The catalysed reaction is K(+)(in) + H(+)(in) = K(+)(out) + H(+)(out). Its function is as follows. Transport of potassium into the cell. Likely operates as a K(+):H(+) symporter. The sequence is that of Probable potassium transport system protein Kup 2 from Rhodopseudomonas palustris (strain BisA53).